We begin with the raw amino-acid sequence, 585 residues long: MGRIIRVTGPLVVADGMKGAKMYEVVRVGEIGLIGEIIRLEGDKAVIQVYEETAGIRPGEPVEGTGSSLSVELGPGLLTAMYDGIQRPLEVLRQLSGDFIARGLTAPALPRDKKWHFTPKVKVGDKVVGGDVLGVVPETSIIEHKILVPPWVEGEIVEIAEEGDYTVEEVIAKVKKPDGTIEELKMYHRWPVRVKRPYKQKLPPEVPLITGQRTIDTFFSQAKGGTAAIPGPFGSGKTVTQHQLAKWSDAQVVVYIGCGERGNEMTDVLEEFPKLKDPKTGKPLMERTVLIANTSNMPVAAREASIYTGITIAEYFRDQGYDVALMADSTSRWAEALREISGRLEEMPGEEGYPAYLASKIAEFYERAGRVITLGSDERVGSVSVIGAVSPPGGDFSEPVVQNTLRVVKVFWALDADLARRRHFPAINWLRSYSLYIDAIQDWWHKNVDPEWRKMRDTAMALLQKEAELQEIVRIVGPDALPDREKAILIVTRMLREDYLQQDAFDEVDTYCPPKKQVTMMRVILNFYEKTMQAVDRGVPVDEIAKLPVREKIGRMKFEPDVEKVRALIDETNQQFEELFKKYGA.

Gly231 to Thr238 is an ATP binding site.

This sequence belongs to the ATPase alpha/beta chains family. Has multiple subunits with at least A(3), B(3), C, D, E, F, H, I and proteolipid K(x).

The protein localises to the cell membrane. It catalyses the reaction ATP + H2O + 4 H(+)(in) = ADP + phosphate + 5 H(+)(out). Produces ATP from ADP in the presence of a proton gradient across the membrane. The archaeal alpha chain is a catalytic subunit. Functionally, component of the A-type ATP synthase that produces ATP from ADP in the presence of a proton gradient across the membrane. The A chain is the catalytic subunit. The chain is A-type ATP synthase subunit A from Thermococcus kodakarensis (strain ATCC BAA-918 / JCM 12380 / KOD1) (Pyrococcus kodakaraensis (strain KOD1)).